A 361-amino-acid chain; its full sequence is RLA class I histocompatibility antigen, alpha chain 11/11 (361 aa).

An N-terminal signal peptide occupies residues 1–24 (MGSMAPRTLLLLLAGALTLKDTQA). The interval 25–114 (GSHSMRYFYT…ALRYYNQSAA (90 aa)) is alpha-1. The Extracellular portion of the chain corresponds to 25–308 (GSHSMRYFYT…EPPAQPTALI (284 aa)). N110 carries an N-linked (GlcNAc...) asparagine glycan. The tract at residues 115–206 (GSHTFQTMFG…EMGKETLQRA (92 aa)) is alpha-2. 2 disulfides stabilise this stretch: C125/C188 and C227/C283. The interval 207–298 (DPPKAHVTHH…GLPEPLTLTW (92 aa)) is alpha-3. The Ig-like C1-type domain maps to 209–297 (PKAHVTHHPA…EGLPEPLTLT (89 aa)). The segment at 299–308 (EPPAQPTALI) is connecting peptide. A helical transmembrane segment spans residues 309-329 (VGIVAGVLGVLLILGAVVAVV). At 330–361 (RRKKHSSDGKGGRYTPAAGGHRDQGSDDSLMP) the chain is on the cytoplasmic side. The interval 335–361 (SSDGKGGRYTPAAGGHRDQGSDDSLMP) is disordered. A phosphoserine mark is found at S355 and S358.

Belongs to the MHC class I family. Heterodimer of an alpha chain and a beta chain (beta-2-microglobulin).

It is found in the membrane. Involved in the presentation of foreign antigens to the immune system. This is RLA class I histocompatibility antigen, alpha chain 11/11 from Oryctolagus cuniculus (Rabbit).